Reading from the N-terminus, the 287-residue chain is NAD kinase (287 aa).

The active-site Proton acceptor is D56. NAD(+) contacts are provided by residues 56-57 (DG), R61, 128-129 (ND), and D156.

This sequence belongs to the NAD kinase family. It depends on a divalent metal cation as a cofactor.

It localises to the cytoplasm. It carries out the reaction NAD(+) + ATP = ADP + NADP(+) + H(+). Its function is as follows. Involved in the regulation of the intracellular balance of NAD and NADP, and is a key enzyme in the biosynthesis of NADP. Catalyzes specifically the phosphorylation on 2'-hydroxyl of the adenosine moiety of NAD to yield NADP. The protein is NAD kinase of Thermomicrobium roseum (strain ATCC 27502 / DSM 5159 / P-2).